Here is a 270-residue protein sequence, read N- to C-terminus: Aliphatic sulfonates import ATP-binding protein SsuB (270 aa).

The ABC transporter domain maps to 17 to 238 (LAANDLRRTF…VRGSHRLAAL (222 aa)). 49–56 (GRSGCGKS) contributes to the ATP binding site. Positions 250–270 (PGTPPEPEPVAPLPTHLRWAH) are disordered. Over residues 251 to 261 (GTPPEPEPVAP) the composition is skewed to pro residues.

The protein belongs to the ABC transporter superfamily. Aliphatic sulfonates importer (TC 3.A.1.17.2) family. In terms of assembly, the complex is composed of two ATP-binding proteins (SsuB), two transmembrane proteins (SsuC) and a solute-binding protein (SsuA).

It is found in the cell inner membrane. The catalysed reaction is ATP + H2O + aliphatic sulfonate-[sulfonate-binding protein]Side 1 = ADP + phosphate + aliphatic sulfonateSide 2 + [sulfonate-binding protein]Side 1.. Part of the ABC transporter complex SsuABC involved in aliphatic sulfonates import. Responsible for energy coupling to the transport system. This Pseudomonas entomophila (strain L48) protein is Aliphatic sulfonates import ATP-binding protein SsuB.